Here is a 320-residue protein sequence, read N- to C-terminus: Ferrochelatase (320 aa).

Fe cation contacts are provided by His194 and Glu275.

It belongs to the ferrochelatase family. As to quaternary structure, monomer.

It is found in the cytoplasm. It catalyses the reaction heme b + 2 H(+) = protoporphyrin IX + Fe(2+). It functions in the pathway porphyrin-containing compound metabolism; protoheme biosynthesis; protoheme from protoporphyrin-IX: step 1/1. Catalyzes the ferrous insertion into protoporphyrin IX. This chain is Ferrochelatase, found in Salmonella paratyphi A (strain ATCC 9150 / SARB42).